Consider the following 211-residue polypeptide: MEIRIVDHPLAASRLTIMRDKRTNNAGFRAALADLGAMLVYEASRDLAIEQFPVSTPVADTQGTRLQDPPIIVPIIRAGLGMVDPALSMIPDAQVGFIGMARDEATHQPVPYLEALPDDLSGRTVFCVDPMLATGGSLLHAIKLLADRGATDITAICMVSAQEGVDALAESGLPCRLVTATIDPELNDDAYIVPGLGDAGDRLYGPRNIDL.

Residues arginine 77, arginine 102, and 129 to 137 (DPMLATGGS) contribute to the 5-phospho-alpha-D-ribose 1-diphosphate site. Uracil-binding positions include isoleucine 192 and 197 to 199 (GDA). Residue aspartate 198 coordinates 5-phospho-alpha-D-ribose 1-diphosphate.

The protein belongs to the UPRTase family. The cofactor is Mg(2+).

The catalysed reaction is UMP + diphosphate = 5-phospho-alpha-D-ribose 1-diphosphate + uracil. Its pathway is pyrimidine metabolism; UMP biosynthesis via salvage pathway; UMP from uracil: step 1/1. With respect to regulation, allosterically activated by GTP. Its function is as follows. Catalyzes the conversion of uracil and 5-phospho-alpha-D-ribose 1-diphosphate (PRPP) to UMP and diphosphate. The protein is Uracil phosphoribosyltransferase of Corynebacterium diphtheriae (strain ATCC 700971 / NCTC 13129 / Biotype gravis).